Consider the following 150-residue polypeptide: D-aminoacyl-tRNA deacylase (150 aa).

Residues 137-138 carry the Gly-cisPro motif, important for rejection of L-amino acids motif; that stretch reads GP.

This sequence belongs to the DTD family. Homodimer.

It localises to the cytoplasm. The enzyme catalyses glycyl-tRNA(Ala) + H2O = tRNA(Ala) + glycine + H(+). The catalysed reaction is a D-aminoacyl-tRNA + H2O = a tRNA + a D-alpha-amino acid + H(+). Its function is as follows. An aminoacyl-tRNA editing enzyme that deacylates mischarged D-aminoacyl-tRNAs. Also deacylates mischarged glycyl-tRNA(Ala), protecting cells against glycine mischarging by AlaRS. Acts via tRNA-based rather than protein-based catalysis; rejects L-amino acids rather than detecting D-amino acids in the active site. By recycling D-aminoacyl-tRNA to D-amino acids and free tRNA molecules, this enzyme counteracts the toxicity associated with the formation of D-aminoacyl-tRNA entities in vivo and helps enforce protein L-homochirality. The protein is D-aminoacyl-tRNA deacylase of Geotalea daltonii (strain DSM 22248 / JCM 15807 / FRC-32) (Geobacter daltonii).